The sequence spans 96 residues: DNA-binding protein HmvA (96 aa).

Positions 52-55 (KTIK) are interaction with DNA.

This sequence belongs to the archaeal histone HMF family. Homodimer. Dimers then assemble into higher oligomers, with the DNA wrapped around the protein core.

Its subcellular location is the cytoplasm. The protein resides in the chromosome. Functionally, binds and compact DNA (95 to 150 base pairs) to form nucleosome-like structures that contain positive DNA supercoils. Increases the resistance of DNA to thermal denaturation (in vitro). In Methanocaldococcus jannaschii (strain ATCC 43067 / DSM 2661 / JAL-1 / JCM 10045 / NBRC 100440) (Methanococcus jannaschii), this protein is DNA-binding protein HmvA (hmvA).